Reading from the N-terminus, the 267-residue chain is Hydroxynaphthalene reductase-like protein Arp2 (267 aa).

Residues Ile25, Asn45, Asp71, and Asn98 each coordinate NADP(+). Catalysis depends on proton donor residues Ser147 and Ser148. NADP(+)-binding residues include Tyr162, Lys166, Val195, and Thr197. Tyr162 serves as the catalytic Proton acceptor. The Lowers pKa of active site Tyr role is filled by Lys166.

It belongs to the short-chain dehydrogenases/reductases (SDR) family.

Hydroxynaphthalene reductase-like protein; part of the Pks2 gene cluster that mediates the formation of infectious structures (appressoria), enabling these fungi to kill insects faster. The product of the Pks2 gene cluster is different from the one of Pks1 and has still not been identified. This is Hydroxynaphthalene reductase-like protein Arp2 from Metarhizium majus (strain ARSEF 297).